The primary structure comprises 263 residues: Virulence plasmid protein pGP6-D-related protein (263 aa).

This sequence belongs to the UPF0137 (pGP6-D) family.

This chain is Virulence plasmid protein pGP6-D-related protein, found in Chlamydia trachomatis serovar D (strain ATCC VR-885 / DSM 19411 / UW-3/Cx).